The chain runs to 298 residues: Glutamate/glycine mitochondrial carrier ymc1 (298 aa).

3 Solcar repeats span residues 14–98 (TKDF…CKRF), 106–193 (VTMP…LVKN), and 206–294 (TPGW…VSQH). Transmembrane regions (helical) follow at residues 17–37 (FLAG…FDCV), 67–87 (LAAF…CVSI), 112–132 (YVSG…VEHV), 172–192 (TAAR…ALVK), 212–232 (CVFG…FDIV), and 266–287 (FYRG…TFYV).

This sequence belongs to the mitochondrial carrier (TC 2.A.29) family.

The protein localises to the mitochondrion inner membrane. Acts as a glutamate and glycine mitochondrial transmembrane transporter. In Schizosaccharomyces pombe (strain 972 / ATCC 24843) (Fission yeast), this protein is Glutamate/glycine mitochondrial carrier ymc1 (ymc1).